We begin with the raw amino-acid sequence, 350 residues long: Small ribosomal subunit biogenesis GTPase RsgA (350 aa).

The segment covering 1-17 has biased composition (polar residues); sequence MSKNKLSKGQQRRVNAN. The tract at residues 1 to 33 is disordered; sequence MSKNKLSKGQQRRVNANHQRRLKTSKEKPDYDD. The 170-residue stretch at 104-273 folds into the CP-type G domain; the sequence is TSVLTRPDFY…VIDSPGVREF (170 aa). GTP is bound by residues 160 to 163 and 214 to 222; these read NKID and GQSGVGKSS. Positions 297, 302, 304, and 310 each coordinate Zn(2+).

It belongs to the TRAFAC class YlqF/YawG GTPase family. RsgA subfamily. As to quaternary structure, monomer. Associates with 30S ribosomal subunit, binds 16S rRNA. Requires Zn(2+) as cofactor.

The protein localises to the cytoplasm. Its function is as follows. One of several proteins that assist in the late maturation steps of the functional core of the 30S ribosomal subunit. Helps release RbfA from mature subunits. May play a role in the assembly of ribosomal proteins into the subunit. Circularly permuted GTPase that catalyzes slow GTP hydrolysis, GTPase activity is stimulated by the 30S ribosomal subunit. The polypeptide is Small ribosomal subunit biogenesis GTPase RsgA (Shigella boydii serotype 18 (strain CDC 3083-94 / BS512)).